The following is a 245-amino-acid chain: Oncostatin-M (245 aa).

An N-terminal signal peptide occupies residues 1–26 (MGAQRMQRTLLSLVLRLLLLCTVATG). 2 cysteine pairs are disulfide-bonded: Cys28/Cys135 and Cys71/Cys177. An N-linked (GlcNAc...) asparagine glycan is attached at Asn97. 2 disordered regions span residues 143–171 (SSDP…STFQ) and 197–245 (WGER…APAR). Pro residues predominate over residues 153-166 (QPGPGPTPLPPTPP). The span at 203-218 (RSRRHSPCRALKRGAR) shows a compositional bias: basic residues. A propeptide spanning residues 207–245 (HSPCRALKRGARRTQPFPEIRRLAPRGQPPGSLWGAPAR) is cleaved from the precursor.

Belongs to the LIF/OSM family. Post-translationally, propeptide processing is not important for receptor binding activity but may be important growth-inhibitory activity.

It is found in the secreted. Growth regulator. Inhibits the proliferation of a number of tumor cell lines. It regulates cytokine production, including IL-6, G-CSF and GM-CSF from endothelial cells. Uses both type I OSM receptor (heterodimers composed of LIFR and IL6ST) and type II OSM receptor (heterodimers composed of OSMR and IL6ST). Involved in the maturation of fetal hepatocytes, thereby promoting liver development and regeneration. The chain is Oncostatin-M (OSM) from Bos taurus (Bovine).